A 264-amino-acid chain; its full sequence is Phosphatidylserine decarboxylase proenzyme (264 aa).

Active-site charge relay system; for autoendoproteolytic cleavage activity residues include D86, H142, and S226. S226 acts as the Schiff-base intermediate with substrate; via pyruvic acid; for decarboxylase activity in catalysis. S226 carries the pyruvic acid (Ser); by autocatalysis modification.

The protein belongs to the phosphatidylserine decarboxylase family. PSD-B subfamily. Prokaryotic type I sub-subfamily. In terms of assembly, heterodimer of a large membrane-associated beta subunit and a small pyruvoyl-containing alpha subunit. It depends on pyruvate as a cofactor. Post-translationally, is synthesized initially as an inactive proenzyme. Formation of the active enzyme involves a self-maturation process in which the active site pyruvoyl group is generated from an internal serine residue via an autocatalytic post-translational modification. Two non-identical subunits are generated from the proenzyme in this reaction, and the pyruvate is formed at the N-terminus of the alpha chain, which is derived from the carboxyl end of the proenzyme. The autoendoproteolytic cleavage occurs by a canonical serine protease mechanism, in which the side chain hydroxyl group of the serine supplies its oxygen atom to form the C-terminus of the beta chain, while the remainder of the serine residue undergoes an oxidative deamination to produce ammonia and the pyruvoyl prosthetic group on the alpha chain. During this reaction, the Ser that is part of the protease active site of the proenzyme becomes the pyruvoyl prosthetic group, which constitutes an essential element of the active site of the mature decarboxylase.

Its subcellular location is the cell membrane. The enzyme catalyses a 1,2-diacyl-sn-glycero-3-phospho-L-serine + H(+) = a 1,2-diacyl-sn-glycero-3-phosphoethanolamine + CO2. The protein operates within phospholipid metabolism; phosphatidylethanolamine biosynthesis; phosphatidylethanolamine from CDP-diacylglycerol: step 2/2. In terms of biological role, catalyzes the formation of phosphatidylethanolamine (PtdEtn) from phosphatidylserine (PtdSer). This chain is Phosphatidylserine decarboxylase proenzyme, found in Geobacillus kaustophilus (strain HTA426).